We begin with the raw amino-acid sequence, 246 residues long: uncharacterized protein (246 aa).

This sequence belongs to the IIV-6 170L family.

This is an uncharacterized protein from Acheta domesticus (House cricket).